A 117-amino-acid polypeptide reads, in one-letter code: Envelope glycoprotein J (117 aa).

Positions 1–26 are cleaved as a signal peptide; it reads MRSLLFVVGAWVAAAVTHLTPNAALA. The segment at 26–64 is disordered; the sequence is ATGTTPTVGANSTADPGTGANGTTVPAAGTPANSTTAAE. Residues 27 to 40 are compositionally biased toward polar residues; it reads TGTTPTVGANSTAD. Topologically, residues 27–73 are extracellular; that stretch reads TGTTPTVGANSTADPGTGANGTTVPAAGTPANSTTAAETPAPFPPVD. Residues asparagine 36, asparagine 46, and asparagine 58 are each glycosylated (N-linked (GlcNAc...) asparagine; by host). The helical transmembrane segment at 74–94 threads the bilayer; the sequence is FALPVVIGGLCALTLAAMGAG. Topologically, residues 95–117 are cytoplasmic; the sequence is ALLHRCCRRAAARRRQRAAYVYA.

Belongs to the alphaherpesvirinae glycoprotein J family.

The protein localises to the host Golgi apparatus membrane. It is found in the host endoplasmic reticulum membrane. The protein resides in the host endosome membrane. Its function is as follows. Inhibits host cell apoptosis. Induces an increase in reactive oxygen species (ROS) in the host cell. The sequence is that of Envelope glycoprotein J (gJ) from Homo sapiens (Human).